The chain runs to 149 residues: Putative pre-16S rRNA nuclease (149 aa).

This sequence belongs to the YqgF nuclease family.

Its subcellular location is the cytoplasm. Could be a nuclease involved in processing of the 5'-end of pre-16S rRNA. The chain is Putative pre-16S rRNA nuclease from Synechococcus sp. (strain ATCC 27144 / PCC 6301 / SAUG 1402/1) (Anacystis nidulans).